The sequence spans 1010 residues: MSQAFNLVLFTEIKQAQNVKTGNDKEPNSKLRAIVRISERSSKKTPRATPRDDFVYTWNSTISLKLRSQLKLPLIQISVWDKQAHRSVYVGEVRFFLIGLLKSLAYNEHTSSWESTPQWYQLYSSEDKKSFSSGTILVQFRVQQHLSKKNLFFNAKSDVTLSDQTGSSDLLNQYIQAIETSTPRSLQKKAFDLSNPNEQRFYPDIETNALASSILDCEIDSMLEDFTYRKPNITESSLHDDTLTDTDFESIHSDPTIPSSALVPKRILFIEILSVTDLPPYKSFTRATFDMDPFVVISFGKRTYRTSWRKHTLTPVFNERLAFEVCDYEKNYDLQFSVLDKDKFSFHDQVATGFVSVSELLEEKTTDKPCTDFKPTSSNLILLDKPMNANESADNLLDTKKKKYKRNVNTDATLQGGLLRKYELVMSLDGKKNWSRKTKDEYIPILKFNTRFERYEILRRQLWMHLLQGNDTQMKGTLDLIELNYFVDCLGSNLSDKTLASFFEYYDKNPWVGETLTIEQVIDSLERLVFKRQCANTHENYIINIDTCPLCGQGRLSLRQDLDILKHLSICASRDWSTVNKVLKPSFVSSKAATRRWYSRLLIKLTFGQYTLGGNSANILIQDRDTGYILEEKMNIHVRLGIKLLYKSFDKANSRKIKTLLRKLSIRQGIKFDSPSSVSQIPSFIKFHKLDVDDCLLQLDEYKTFNEFFYRKLKPGSRPQEDENNSNIATSPADCRCTVFESITFAKTFWIKGRNFTTKKLFGSFYSREMADLYDECSIGIFRLAPQDYHRFHSPVTGTVGKVQSISGEYFTVNPMAIRSDLDVFGENVRCLLPIQTKEFGRVLVVPVGAMMVGSIILSVKENQEVKKGDELGYFKFGGSTLLVLFPNKRFKFDSDLLANSNNKIETLIKVGMSIGHTPEEPQFERHYRSFEEEPVDQQLRIIRCITGGSTFEESKQATQRRNELLGNEGSPQEKDLQVENLSWEAKNMNLEELEENESLLLYDLVNDGT.

C2 domains are found at residues 1-114 (MSQA…SSWE) and 247-370 (DFES…DKPC). Ca(2+) contacts are provided by Asp-342, Ser-345, and Asp-348. Positions 458 to 493 (LRRQLWMHLLQGNDTQMKGTLDLIELNYFVDCLGSN) constitute an EF-hand domain. Residues Asp-734, His-793, and Ser-880 each act as charge relay system; for autoendoproteolytic cleavage activity in the active site. Ser-880 serves as the catalytic Schiff-base intermediate with substrate; via pyruvic acid; for decarboxylase activity. Position 880 is a pyruvic acid (Ser); by autocatalysis (Ser-880).

This sequence belongs to the phosphatidylserine decarboxylase family. PSD-B subfamily. Eukaryotic type II sub-subfamily. As to quaternary structure, heterodimer of a large membrane-associated beta subunit and a small pyruvoyl-containing alpha subunit. Interacts with pstB2. This interaction may be a means to structurally tether the donor membrane (ER) harboring PstB2 to acceptor membranes (Golgi/endosomes) harboring PSD2 during PtdSer transport to the site of PtdEtn synthesis. It depends on pyruvate as a cofactor. Ca(2+) is required as a cofactor. Is synthesized initially as an inactive proenzyme. Formation of the active enzyme involves a self-maturation process in which the active site pyruvoyl group is generated from an internal serine residue via an autocatalytic post-translational modification. Two non-identical subunits are generated from the proenzyme in this reaction, and the pyruvate is formed at the N-terminus of the alpha chain, which is derived from the carboxyl end of the proenzyme. The autoendoproteolytic cleavage occurs by a canonical serine protease mechanism, in which the side chain hydroxyl group of the serine supplies its oxygen atom to form the C-terminus of the beta chain, while the remainder of the serine residue undergoes an oxidative deamination to produce ammonia and the pyruvoyl prosthetic group on the alpha chain. During this reaction, the Ser that is part of the protease active site of the proenzyme becomes the pyruvoyl prosthetic group, which constitutes an essential element of the active site of the mature decarboxylase.

Its subcellular location is the golgi apparatus membrane. The protein resides in the endosome membrane. It catalyses the reaction a 1,2-diacyl-sn-glycero-3-phospho-L-serine + H(+) = a 1,2-diacyl-sn-glycero-3-phosphoethanolamine + CO2. It functions in the pathway phospholipid metabolism; phosphatidylethanolamine biosynthesis; phosphatidylethanolamine from CDP-diacylglycerol: step 2/2. Functionally, catalyzes the formation of phosphatidylethanolamine (PtdEtn) from phosphatidylserine (PtdSer). Plays a central role in phospholipid metabolism and in the interorganelle trafficking of phosphatidylserine. The polypeptide is Phosphatidylserine decarboxylase proenzyme 2 (Komagataella phaffii (strain GS115 / ATCC 20864) (Yeast)).